The chain runs to 410 residues: Protein trichome birefringence-like 34 (410 aa).

A helical; Signal-anchor for type II membrane protein membrane pass occupies residues 13–33; that stretch reads TSFHTIAAVLVAGLIFTAVFL. Residues 133-135 carry the GDS motif motif; sequence GDS. A DCXHWCLPGXXDXWN motif motif is present at residues 383 to 397; it reads DCIHWCLPGVPDVWN.

This sequence belongs to the PC-esterase family. TBL subfamily.

The protein resides in the golgi apparatus membrane. Functionally, may act as a bridging protein that binds pectin and other cell wall polysaccharides. Probably involved in maintaining esterification of pectins. May be involved in the specific O-acetylation of cell wall polymers. This Arabidopsis thaliana (Mouse-ear cress) protein is Protein trichome birefringence-like 34 (TBL34).